We begin with the raw amino-acid sequence, 257 residues long: MTKTLTKKLANKDHASVVTYIMGGDGGLDNLEEQLLFLEKSGVSAIEIGIPFSDPVADGPVIQLAGLRALKERVSLEAILTKLATSKVQIPLIIMSYINPIFHLGIPKFIEMVQKTPVKGLIIPDLPYEHRTLITPELKGTDIALIPLVSLTSPKERLEEIANQAEGFIYAVTVNGTTGVRNEFNTHIDTHLAYLKSISPVPVLAGFGVSSIEHVEKFARVCDGVIIGSKVVQMLHDGETRELGTFLQNAAEVQIEN.

Residues Glu-47 and Asp-58 each act as proton acceptor in the active site.

It belongs to the TrpA family. As to quaternary structure, tetramer of two alpha and two beta chains.

The enzyme catalyses (1S,2R)-1-C-(indol-3-yl)glycerol 3-phosphate + L-serine = D-glyceraldehyde 3-phosphate + L-tryptophan + H2O. It participates in amino-acid biosynthesis; L-tryptophan biosynthesis; L-tryptophan from chorismate: step 5/5. In terms of biological role, the alpha subunit is responsible for the aldol cleavage of indoleglycerol phosphate to indole and glyceraldehyde 3-phosphate. The chain is Tryptophan synthase alpha chain from Listeria innocua serovar 6a (strain ATCC BAA-680 / CLIP 11262).